The primary structure comprises 167 residues: Leptin (167 aa).

A signal peptide spans Met-1 to Ala-21. Cys-117 and Cys-167 are disulfide-bonded.

It belongs to the leptin family.

It localises to the secreted. Key player in the regulation of energy balance and body weight control. Once released into the circulation, has central and peripheral effects by binding LEPR, found in many tissues, which results in the activation of several major signaling pathways. In the hypothalamus, acts as an appetite-regulating factor that induces a decrease in food intake and an increase in energy consumption by inducing anorexinogenic factors and suppressing orexigenic neuropeptides, also regulates bone mass and secretion of hypothalamo-pituitary-adrenal hormones. In the periphery, increases basal metabolism, influences reproductive function, regulates pancreatic beta-cell function and insulin secretion, is pro-angiogenic for endothelial cell and affects innate and adaptive immunity. In the arcuate nucleus of the hypothalamus, activates by depolarization POMC neurons inducing FOS and SOCS3 expression to release anorexigenic peptides and inhibits by hyperpolarization NPY neurons inducing SOCS3 with a consequent reduction on release of orexigenic peptides. In addition to its known satiety inducing effect, has a modulatory role in nutrient absorption. In the intestine, reduces glucose absorption by enterocytes by activating PKC and leading to a sequential activation of p38, PI3K and ERK signaling pathways which exerts an inhibitory effect on glucose absorption. Acts as a growth factor on certain tissues, through the activation of different signaling pathways increases expression of genes involved in cell cycle regulation such as CCND1, via JAK2-STAT3 pathway, or VEGFA, via MAPK1/3 and PI3K-AKT1 pathways. May also play an apoptotic role via JAK2-STAT3 pathway and up-regulation of BIRC5 expression. Pro-angiogenic, has mitogenic activity on vascular endothelial cells and plays a role in matrix remodeling by regulating the expression of matrix metalloproteinases (MMPs) and tissue inhibitors of metalloproteinases (TIMPs). In innate immunity, modulates the activity and function of neutrophils by increasing chemotaxis and the secretion of oxygen radicals. Increases phagocytosis by macrophages and enhances secretion of pro-inflammatory mediators. Increases cytotoxic ability of NK cells. Plays a pro-inflammatory role, in synergy with IL1B, by inducing NOS2 which promotes the production of IL6, IL8 and Prostaglandin E2, through a signaling pathway that involves JAK2, PI3K, MAP2K1/MEK1 and MAPK14/p38. In adaptive immunity, promotes the switch of memory T-cells towards T helper-1 cell immune responses. Increases CD4(+)CD25(-) T-cell proliferation and reduces autophagy during TCR (T-cell receptor) stimulation, through MTOR signaling pathway activation and BCL2 up-regulation. This chain is Leptin (LEP), found in Felis catus (Cat).